The chain runs to 156 residues: ATP synthase subunit b (156 aa).

The helical transmembrane segment at 12–32 (VAFFIFVLFCMKFVWPPVIAA) threads the bilayer.

This sequence belongs to the ATPase B chain family. In terms of assembly, F-type ATPases have 2 components, F(1) - the catalytic core - and F(0) - the membrane proton channel. F(1) has five subunits: alpha(3), beta(3), gamma(1), delta(1), epsilon(1). F(0) has three main subunits: a(1), b(2) and c(10-14). The alpha and beta chains form an alternating ring which encloses part of the gamma chain. F(1) is attached to F(0) by a central stalk formed by the gamma and epsilon chains, while a peripheral stalk is formed by the delta and b chains.

The protein resides in the cell inner membrane. Its function is as follows. F(1)F(0) ATP synthase produces ATP from ADP in the presence of a proton or sodium gradient. F-type ATPases consist of two structural domains, F(1) containing the extramembraneous catalytic core and F(0) containing the membrane proton channel, linked together by a central stalk and a peripheral stalk. During catalysis, ATP synthesis in the catalytic domain of F(1) is coupled via a rotary mechanism of the central stalk subunits to proton translocation. In terms of biological role, component of the F(0) channel, it forms part of the peripheral stalk, linking F(1) to F(0). This Pseudomonas paraeruginosa (strain DSM 24068 / PA7) (Pseudomonas aeruginosa (strain PA7)) protein is ATP synthase subunit b.